Consider the following 345-residue polypeptide: Molybdate/tungstate import ATP-binding protein WtpC (345 aa).

An ABC transporter domain is found at 2 to 231; sequence LKVESISKDY…PKSEEVARFL (230 aa). Residue 33-40 participates in ATP binding; sequence GPSGSGKT. A Mop domain is found at 280–345; it reads KTSARNVFKA…FKASAIHVFP (66 aa).

This sequence belongs to the ABC transporter superfamily. Sulfate/tungstate importer (TC 3.A.1.6) family. In terms of assembly, the complex is composed of two ATP-binding proteins (WtpC), two transmembrane proteins (WtpB) and a solute-binding protein (WtpA).

It is found in the cell membrane. The enzyme catalyses tungstate(in) + ATP + H2O = tungstate(out) + ADP + phosphate + H(+). Part of the ABC transporter complex WtpABC involved in molybdate/tungstate import. Responsible for energy coupling to the transport system. In Pyrococcus horikoshii (strain ATCC 700860 / DSM 12428 / JCM 9974 / NBRC 100139 / OT-3), this protein is Molybdate/tungstate import ATP-binding protein WtpC (wtpC).